Here is a 330-residue protein sequence, read N- to C-terminus: Aspartate--ammonia ligase (330 aa).

The protein belongs to the class-II aminoacyl-tRNA synthetase family. AsnA subfamily.

The protein localises to the cytoplasm. It catalyses the reaction L-aspartate + NH4(+) + ATP = L-asparagine + AMP + diphosphate + H(+). The protein operates within amino-acid biosynthesis; L-asparagine biosynthesis; L-asparagine from L-aspartate (ammonia route): step 1/1. The chain is Aspartate--ammonia ligase from Streptococcus pyogenes serotype M3 (strain ATCC BAA-595 / MGAS315).